The sequence spans 276 residues: MKLCGFEVGLNQPLFLIAGPCVIESLQLQLDTAGVLKEITSKLGLNFIFKSSFDKANRTSGSSFRGPGLEEGLKVLEAVKTQIGVPVLTDVHEYTPIDEVATVVDVLQTPAFLVRQTDFIRNVCAVGKPVNIKKGQFLSPWDMKPVVEKAKSTGNSQILVCERGASFGYNNLVSDMRSLAVMRETGCPVVFDATHSVQLPGAQGGRSGGQREFVPVLARAAVAVGISGLFAETHPDPPNALSDGPNAWPLRTMAMLLETLVELDAVTKKRGFLEQD.

Belongs to the KdsA family.

The protein resides in the cytoplasm. The catalysed reaction is D-arabinose 5-phosphate + phosphoenolpyruvate + H2O = 3-deoxy-alpha-D-manno-2-octulosonate-8-phosphate + phosphate. Its pathway is carbohydrate biosynthesis; 3-deoxy-D-manno-octulosonate biosynthesis; 3-deoxy-D-manno-octulosonate from D-ribulose 5-phosphate: step 2/3. It participates in bacterial outer membrane biogenesis; lipopolysaccharide biosynthesis. The chain is 2-dehydro-3-deoxyphosphooctonate aldolase from Xylella fastidiosa (strain M23).